Consider the following 273-residue polypeptide: 2-dehydro-3-deoxyphosphooctonate aldolase (273 aa).

Belongs to the KdsA family.

The protein localises to the cytoplasm. It carries out the reaction D-arabinose 5-phosphate + phosphoenolpyruvate + H2O = 3-deoxy-alpha-D-manno-2-octulosonate-8-phosphate + phosphate. It participates in carbohydrate biosynthesis; 3-deoxy-D-manno-octulosonate biosynthesis; 3-deoxy-D-manno-octulosonate from D-ribulose 5-phosphate: step 2/3. Its pathway is bacterial outer membrane biogenesis; lipopolysaccharide biosynthesis. The polypeptide is 2-dehydro-3-deoxyphosphooctonate aldolase (Cyanothece sp. (strain PCC 7425 / ATCC 29141)).